The following is a 356-amino-acid chain: Cell division control protein 10 (356 aa).

The Septin-type G domain occupies K36 to I286. Positions G46–S53 are G1 motif. Residues G46–S53 and T70 contribute to the GTP site. The segment at T93–E96 is G3 motif. Residues P163–D166 form a G4 motif region. GTP contacts are provided by residues K164–E172 and R235.

The protein belongs to the TRAFAC class TrmE-Era-EngA-EngB-Septin-like GTPase superfamily. Septin GTPase family. In terms of assembly, component of the septin complex.

In terms of biological role, septins are GTPases involved in cytokinesis. The septins localize to the site of cleavage and act as a structural scaffold that recruits different components involved in diverse processes at specific stages during the cell cycle. Septins are also involved in cell morphogenesis, chitin deposition, cell cycle regulation, cell compartmentalization and spore wall formation. This is Cell division control protein 10 (CDC10) from Encephalitozoon cuniculi (strain GB-M1) (Microsporidian parasite).